The following is a 419-amino-acid chain: UDP-N-acetylglucosamine 1-carboxyvinyltransferase 2 (419 aa).

24–25 (KN) contacts phosphoenolpyruvate. Arg94 provides a ligand contact to UDP-N-acetyl-alpha-D-glucosamine. Cys118 functions as the Proton donor in the catalytic mechanism. Cys118 is subject to 2-(S-cysteinyl)pyruvic acid O-phosphothioketal. UDP-N-acetyl-alpha-D-glucosamine is bound by residues 123-127 (RPIDQ), Asp307, and Ile329.

The protein belongs to the EPSP synthase family. MurA subfamily.

The protein resides in the cytoplasm. It carries out the reaction phosphoenolpyruvate + UDP-N-acetyl-alpha-D-glucosamine = UDP-N-acetyl-3-O-(1-carboxyvinyl)-alpha-D-glucosamine + phosphate. The protein operates within cell wall biogenesis; peptidoglycan biosynthesis. In terms of biological role, cell wall formation. Adds enolpyruvyl to UDP-N-acetylglucosamine. This Staphylococcus epidermidis (strain ATCC 35984 / DSM 28319 / BCRC 17069 / CCUG 31568 / BM 3577 / RP62A) protein is UDP-N-acetylglucosamine 1-carboxyvinyltransferase 2.